The chain runs to 361 residues: Queuine tRNA-ribosyltransferase (361 aa).

Catalysis depends on Asp-89, which acts as the Proton acceptor. Substrate contacts are provided by residues 89–93 (DSGGF), Asp-143, Gln-185, and Gly-212. An RNA binding region spans residues 243-249 (GVGTPED). Asp-262 (nucleophile) is an active-site residue. The segment at 267-271 (TRNAR) is RNA binding; important for wobble base 34 recognition. Zn(2+)-binding residues include Cys-300, Cys-302, Cys-305, and His-331.

The protein belongs to the queuine tRNA-ribosyltransferase family. In terms of assembly, homodimer. Within each dimer, one monomer is responsible for RNA recognition and catalysis, while the other monomer binds to the replacement base PreQ1. Zn(2+) serves as cofactor.

It carries out the reaction 7-aminomethyl-7-carbaguanine + guanosine(34) in tRNA = 7-aminomethyl-7-carbaguanosine(34) in tRNA + guanine. Its pathway is tRNA modification; tRNA-queuosine biosynthesis. Its function is as follows. Catalyzes the base-exchange of a guanine (G) residue with the queuine precursor 7-aminomethyl-7-deazaguanine (PreQ1) at position 34 (anticodon wobble position) in tRNAs with GU(N) anticodons (tRNA-Asp, -Asn, -His and -Tyr). Catalysis occurs through a double-displacement mechanism. The nucleophile active site attacks the C1' of nucleotide 34 to detach the guanine base from the RNA, forming a covalent enzyme-RNA intermediate. The proton acceptor active site deprotonates the incoming PreQ1, allowing a nucleophilic attack on the C1' of the ribose to form the product. After dissociation, two additional enzymatic reactions on the tRNA convert PreQ1 to queuine (Q), resulting in the hypermodified nucleoside queuosine (7-(((4,5-cis-dihydroxy-2-cyclopenten-1-yl)amino)methyl)-7-deazaguanosine). The polypeptide is Queuine tRNA-ribosyltransferase (Nitrosomonas eutropha (strain DSM 101675 / C91 / Nm57)).